The sequence spans 286 residues: Eukaryotic translation initiation factor 3 subunit J (286 aa).

Disordered regions lie at residues 1–35 (MSWD…DSWD), 141–162 (AASG…HPLF), and 229–258 (KAER…AVKT). The span at 21 to 35 (WEEEGNDEPLLDSWD) shows a compositional bias: acidic residues. Residues 35-75 (DIDEEEVARKKKEEEAKKKAEKEALKKKQEESKAKKLSKNK) adopt a coiled-coil conformation.

This sequence belongs to the eIF-3 subunit J family. Component of the eukaryotic translation initiation factor 3 (eIF-3) complex.

The protein localises to the cytoplasm. Functionally, component of the eukaryotic translation initiation factor 3 (eIF-3) complex, which is involved in protein synthesis of a specialized repertoire of mRNAs and, together with other initiation factors, stimulates binding of mRNA and methionyl-tRNAi to the 40S ribosome. The eIF-3 complex specifically targets and initiates translation of a subset of mRNAs involved in cell proliferation. This is Eukaryotic translation initiation factor 3 subunit J from Debaryomyces hansenii (strain ATCC 36239 / CBS 767 / BCRC 21394 / JCM 1990 / NBRC 0083 / IGC 2968) (Yeast).